The chain runs to 534 residues: Pentatricopeptide repeat-containing protein At5g08305 (534 aa).

11 PPR repeats span residues 41-71 (PFVSQTLSFSALSSSGDVDYAYKFLSKLSDP), 72-106 (PNYGWNFVIRGFSNSRNPEKSISVYIQMLRFGLLP), 107-141 (DHMTYPFLMKSSSRLSNRKLGGSLHCSVVKSGLEW), 142-172 (DLFICNTLIHMYGSFRDQASARKLFDEMPHK), 173-203 (NLVTWNSILDAYAKSGDVVSARLVFDEMSER), 204-238 (DVVTWSSMIDGYVKRGEYNKALEIFDQMMRMGSSK), 240-274 (NEVTMVSVICACAHLGALNRGKTVHRYILDVHLPL), 275-305 (TVILQTSLIDMYAKCGSIGDAWSVFYRASVK), 308-342 (DALMWNAIIGGLASHGFIRESLQLFHKMRESKIDP), 343-377 (DEITFLCLLAACSHGGLVKEAWHFFKSLKESGAEP), and 378-408 (KSEHYACMVDVLSRAGLVKDAHDFISEMPIK). Positions 413–488 (MLGALLNGCI…IAGHSILDLD (76 aa)) are type E motif. Residues 489–519 (GTRHRFIAHDKTHFHSDKIYAVLQLTGAWMN) are type E(+) motif.

This sequence belongs to the PPR family. PCMP-E subfamily.

This chain is Pentatricopeptide repeat-containing protein At5g08305 (PCMP-E105), found in Arabidopsis thaliana (Mouse-ear cress).